Here is a 359-residue protein sequence, read N- to C-terminus: MPITIAVDAMGSDKAPTPEIEGALQAIRHFDVRVILVGKQDVLREHLGAHAHPGRLPIEIVHASEVISMHDKAALAVRSKRDSSMRVGLRLVREGKADAFVTAGNTGAAMATAKMVLGALPGVDRPALAAVFPTEKRTAAILLDVGANVDCKPQNLQQFAIMGEVYFRTVFAGKSPHARSPRVGILSIGEEETKGNELTREAYKLVKTLPLNFVGNVEGRDLFNGNVDVLVCDGFVGNVALKISEGLVKTVREMLKESLQQTIARQVGFLLSRQAFVDFKKRLDYSEYGGAPLLGLKGAAFVGHGSSNANAIKNAIRVAAEYVEHRVNEAIAREIAAASEKLGNHHSSAKKEEGEEARA.

This sequence belongs to the PlsX family. As to quaternary structure, homodimer. Probably interacts with PlsY.

It localises to the cytoplasm. It carries out the reaction a fatty acyl-[ACP] + phosphate = an acyl phosphate + holo-[ACP]. It participates in lipid metabolism; phospholipid metabolism. In terms of biological role, catalyzes the reversible formation of acyl-phosphate (acyl-PO(4)) from acyl-[acyl-carrier-protein] (acyl-ACP). This enzyme utilizes acyl-ACP as fatty acyl donor, but not acyl-CoA. The protein is Phosphate acyltransferase of Koribacter versatilis (strain Ellin345).